The chain runs to 435 residues: MSETHLSNQKFADFSLQTEIKTALNESGFEYCTPIQALSLPILLQKKDIAGQAQTGTGKTLAFLVATFNHLLTTPIPEGRQLNQPRAIIMAPTRELAIQIAKDADLLAKHTGLKVGIVYGGESYEVQRKVLDKGVDILIGTTGRIIDYVRQGIINVSAIQAVVLDEADRMFDLGFIKDIRFLFRRMPDAKSRLNMLFSATLSMKVQELAYDHMNEPEKVEIAPNEKTSKNIKEEIFYPSMDEKMRLLLTLLEEDWPDKAIVFSNTKHSCEKLWSWLEGDGHRVGLLTGDVPQKKRIRILELFTEGKLDVLVATDVAARGLHISDVSHVYNYDLPDDCEDYVHRIGRTGRAGKKGVSVSFACEEYALNLPAIEEYINHTIPVTNYDSEALLDDIPAPVRVHRKHNSRPQGRSGSGGKPRSGNRNAPRRHDKTRRHS.

A Q motif motif is present at residues glutamine 9–alanine 37. The Helicase ATP-binding domain maps to leucine 40 to valine 219. Residue alanine 53–threonine 60 participates in ATP binding. The DEAD box signature appears at aspartate 165–aspartate 168. In terms of domain architecture, Helicase C-terminal spans lysine 243 to leucine 390. Residues alanine 395 to serine 435 are disordered. Positions alanine 424–serine 435 are enriched in basic residues.

The protein belongs to the DEAD box helicase family. RhlB subfamily. Component of the RNA degradosome, which is a multiprotein complex involved in RNA processing and mRNA degradation.

Its subcellular location is the cytoplasm. The catalysed reaction is ATP + H2O = ADP + phosphate + H(+). DEAD-box RNA helicase involved in RNA degradation. Has RNA-dependent ATPase activity and unwinds double-stranded RNA. The polypeptide is ATP-dependent RNA helicase RhlB (Shewanella sediminis (strain HAW-EB3)).